The sequence spans 268 residues: Shikimate dehydrogenase (NADP(+)) (268 aa).

Shikimate is bound at residue T62. K66 (proton acceptor) is an active-site residue. E78 is an NADP(+) binding site. Positions 87 and 102 each coordinate shikimate. Residues 126–130 (GSGGI) and L207 each bind NADP(+). Residue Y209 coordinates shikimate. G230 lines the NADP(+) pocket.

This sequence belongs to the shikimate dehydrogenase family. Homodimer.

It catalyses the reaction shikimate + NADP(+) = 3-dehydroshikimate + NADPH + H(+). Its pathway is metabolic intermediate biosynthesis; chorismate biosynthesis; chorismate from D-erythrose 4-phosphate and phosphoenolpyruvate: step 4/7. Functionally, involved in the biosynthesis of the chorismate, which leads to the biosynthesis of aromatic amino acids. Catalyzes the reversible NADPH linked reduction of 3-dehydroshikimate (DHSA) to yield shikimate (SA). In Thermoplasma acidophilum (strain ATCC 25905 / DSM 1728 / JCM 9062 / NBRC 15155 / AMRC-C165), this protein is Shikimate dehydrogenase (NADP(+)).